A 130-amino-acid chain; its full sequence is Protein ApaG (130 aa).

The ApaG domain occupies 3-127; the sequence is RAVTRGIEVS…FSLDIPEQRR (125 aa).

This Brucella anthropi (strain ATCC 49188 / DSM 6882 / CCUG 24695 / JCM 21032 / LMG 3331 / NBRC 15819 / NCTC 12168 / Alc 37) (Ochrobactrum anthropi) protein is Protein ApaG.